We begin with the raw amino-acid sequence, 180 residues long: Acireductone dioxygenase 1 (180 aa).

Residues histidine 82, histidine 84, glutamate 88, and histidine 127 each coordinate Fe(2+). Ni(2+) contacts are provided by histidine 82, histidine 84, glutamate 88, and histidine 127.

It belongs to the acireductone dioxygenase (ARD) family. It depends on Fe(2+) as a cofactor. The cofactor is Ni(2+).

It localises to the cytoplasm. The protein resides in the nucleus. The catalysed reaction is 1,2-dihydroxy-5-(methylsulfanyl)pent-1-en-3-one + O2 = 4-methylsulfanyl-2-oxobutanoate + formate + 2 H(+). It catalyses the reaction 1,2-dihydroxy-5-(methylsulfanyl)pent-1-en-3-one + O2 = 3-(methylsulfanyl)propanoate + CO + formate + 2 H(+). Its pathway is amino-acid biosynthesis; L-methionine biosynthesis via salvage pathway; L-methionine from S-methyl-5-thio-alpha-D-ribose 1-phosphate: step 5/6. Functionally, catalyzes 2 different reactions between oxygen and the acireductone 1,2-dihydroxy-3-keto-5-methylthiopentene (DHK-MTPene) depending upon the metal bound in the active site. Fe-containing acireductone dioxygenase (Fe-ARD) produces formate and 2-keto-4-methylthiobutyrate (KMTB), the alpha-ketoacid precursor of methionine in the methionine recycle pathway. Ni-containing acireductone dioxygenase (Ni-ARD) produces methylthiopropionate, carbon monoxide and formate, and does not lie on the methionine recycle pathway. In Sorghum bicolor (Sorghum), this protein is Acireductone dioxygenase 1.